A 289-amino-acid polypeptide reads, in one-letter code: NFIL3 like protein (289 aa).

Residues 1 to 27 are disordered; sequence MDVGFSGLPDVSQSHSKTLWGARGRGP. In terms of domain architecture, bZIP spans 42–105; the sequence is DTVYWEKRRK…GLLPLTGGPR (64 aa). The interval 48 to 64 is basic motif; it reads KRRKNNEAAKRSREKRR. The tract at residues 70–91 is leucine-zipper; the sequence is IEGRLAALMEENALLKGELKAL.

This sequence belongs to the bZIP family. NFIL3 subfamily.

Its subcellular location is the nucleus. This Homo sapiens (Human) protein is NFIL3 like protein.